An 875-amino-acid polypeptide reads, in one-letter code: DNA mismatch repair protein MutS (875 aa).

626–633 contributes to the ATP binding site; the sequence is GPNMAGKS. The interval 830–855 is disordered; sequence RAAPPPPAPAAPKTSPVEERLREIQP. Residues 845–855 are compositionally biased toward basic and acidic residues; the sequence is PVEERLREIQP.

The protein belongs to the DNA mismatch repair MutS family.

Its function is as follows. This protein is involved in the repair of mismatches in DNA. It is possible that it carries out the mismatch recognition step. This protein has a weak ATPase activity. In Cereibacter sphaeroides (strain ATCC 17023 / DSM 158 / JCM 6121 / CCUG 31486 / LMG 2827 / NBRC 12203 / NCIMB 8253 / ATH 2.4.1.) (Rhodobacter sphaeroides), this protein is DNA mismatch repair protein MutS.